A 194-amino-acid chain; its full sequence is Adenylate kinase (194 aa).

10–15 provides a ligand contact to ATP; the sequence is GAGKGT. The NMP stretch occupies residues 30–59; sequence STGDMLRAAVAQQSEIGKRAKAVMDAGQLV. Residues Thr31, Arg36, 57–59, 85–88, and Gln92 each bind AMP; these read QLV and GYPR. The tract at residues 126-142 is LID; that stretch reads SRVAETIAKGGQVRSDD. Arg127 provides a ligand contact to ATP. 2 residues coordinate AMP: Arg139 and Arg150. Ala178 is an ATP binding site.

This sequence belongs to the adenylate kinase family. As to quaternary structure, monomer.

The protein localises to the cytoplasm. The enzyme catalyses AMP + ATP = 2 ADP. Its pathway is purine metabolism; AMP biosynthesis via salvage pathway; AMP from ADP: step 1/1. Catalyzes the reversible transfer of the terminal phosphate group between ATP and AMP. Plays an important role in cellular energy homeostasis and in adenine nucleotide metabolism. This chain is Adenylate kinase, found in Brucella abortus (strain S19).